The chain runs to 306 residues: Bifunctional protein FolD 1 (306 aa).

NADP(+) contacts are provided by residues 170-172, T199, and V240; that span reads GRG. Residues 285–306 are disordered; it reads ARRTRSSRTPVRLPDSGAPAGR.

The protein belongs to the tetrahydrofolate dehydrogenase/cyclohydrolase family. As to quaternary structure, homodimer.

It catalyses the reaction (6R)-5,10-methylene-5,6,7,8-tetrahydrofolate + NADP(+) = (6R)-5,10-methenyltetrahydrofolate + NADPH. The catalysed reaction is (6R)-5,10-methenyltetrahydrofolate + H2O = (6R)-10-formyltetrahydrofolate + H(+). It participates in one-carbon metabolism; tetrahydrofolate interconversion. Catalyzes the oxidation of 5,10-methylenetetrahydrofolate to 5,10-methenyltetrahydrofolate and then the hydrolysis of 5,10-methenyltetrahydrofolate to 10-formyltetrahydrofolate. This chain is Bifunctional protein FolD 1, found in Salinispora tropica (strain ATCC BAA-916 / DSM 44818 / JCM 13857 / NBRC 105044 / CNB-440).